The following is a 415-amino-acid chain: Imidazolonepropionase (415 aa).

Residues His80 and His82 each coordinate Fe(3+). Zn(2+) is bound by residues His80 and His82. Arg89, Tyr152, and His185 together coordinate 4-imidazolone-5-propanoate. Tyr152 provides a ligand contact to N-formimidoyl-L-glutamate. His250 contacts Fe(3+). Zn(2+) is bound at residue His250. 4-imidazolone-5-propanoate is bound at residue Gln253. Residue Asp325 participates in Fe(3+) binding. Position 325 (Asp325) interacts with Zn(2+). The N-formimidoyl-L-glutamate site is built by Asn327 and Gly329. Residue Thr330 participates in 4-imidazolone-5-propanoate binding.

The protein belongs to the metallo-dependent hydrolases superfamily. HutI family. Zn(2+) serves as cofactor. Fe(3+) is required as a cofactor.

It localises to the cytoplasm. It carries out the reaction 4-imidazolone-5-propanoate + H2O = N-formimidoyl-L-glutamate. The protein operates within amino-acid degradation; L-histidine degradation into L-glutamate; N-formimidoyl-L-glutamate from L-histidine: step 3/3. Catalyzes the hydrolytic cleavage of the carbon-nitrogen bond in imidazolone-5-propanoate to yield N-formimidoyl-L-glutamate. It is the third step in the universal histidine degradation pathway. The chain is Imidazolonepropionase from Rhizobium meliloti (strain 1021) (Ensifer meliloti).